A 299-amino-acid chain; its full sequence is MTFKSGFVAILGRPNVGKSTFLNHVMGQKIAIMSDKAQTTRNKIMGIYTTDKEQIVFIDTPGIHKPKTALGDFMVESAYSTLREVDTVLFMVPADEARGKGDDMIIERLKAAKVPVILVVNKIDKVHPDQLLSQIDDFRNQMDFKEIVPISALQGNNVSRLVDILSENLDEGFQYFPSDQITDHPERFLVSEMVREKVLHLTREEIPHSVAVVVDSMKRDEETDKVHIRATIMVERDSQKGIIIGKGGAMLKKIGSMARRDIELMLGDKVFLETWVKVKKNWRDKKLDLADFGYNEREY.

The Era-type G domain maps to 4-171 (KSGFVAILGR…VDILSENLDE (168 aa)). Positions 12–19 (GRPNVGKS) are G1. Residue 12–19 (GRPNVGKS) participates in GTP binding. The interval 38–42 (QTTRN) is G2. Residues 59 to 62 (DTPG) form a G3 region. GTP-binding positions include 59-63 (DTPGI) and 121-124 (NKID). Residues 121–124 (NKID) form a G4 region. A G5 region spans residues 150 to 152 (ISA). The 79-residue stretch at 202-280 (TREEIPHSVA…FLETWVKVKK (79 aa)) folds into the KH type-2 domain.

The protein belongs to the TRAFAC class TrmE-Era-EngA-EngB-Septin-like GTPase superfamily. Era GTPase family. Monomer.

It localises to the cytoplasm. The protein resides in the cell membrane. Functionally, an essential GTPase that binds both GDP and GTP, with rapid nucleotide exchange. Plays a role in 16S rRNA processing and 30S ribosomal subunit biogenesis and possibly also in cell cycle regulation and energy metabolism. The polypeptide is GTPase Era (Streptococcus pneumoniae (strain P1031)).